The chain runs to 173 residues: NADH-ubiquinone oxidoreductase chain 6 (173 aa).

Transmembrane regions (helical) follow at residues 1–21 (MTYF…AVAS), 27–47 (YGVV…LSLG), 48–68 (VSFV…VVFV), 87–107 (VVGY…VGGF), and 139–159 (CGVG…FVVL).

The protein belongs to the complex I subunit 6 family.

It localises to the mitochondrion membrane. The catalysed reaction is a ubiquinone + NADH + 5 H(+)(in) = a ubiquinol + NAD(+) + 4 H(+)(out). In terms of biological role, core subunit of the mitochondrial membrane respiratory chain NADH dehydrogenase (Complex I) that is believed to belong to the minimal assembly required for catalysis. Complex I functions in the transfer of electrons from NADH to the respiratory chain. The immediate electron acceptor for the enzyme is believed to be ubiquinone. The polypeptide is NADH-ubiquinone oxidoreductase chain 6 (MT-ND6) (Aethia cristatella (Crested auklet)).